A 653-amino-acid chain; its full sequence is tRNA 5-methylaminomethyl-2-thiouridine biosynthesis bifunctional protein MnmC (653 aa).

The interval 1–236 (MPDRLVPATL…KFAMLVGEYA (236 aa)) is tRNA (mnm(5)s(2)U34)-methyltransferase. The FAD-dependent cmnm(5)s(2)U34 oxidoreductase stretch occupies residues 260–653 (IGAGLAGCAL…IRALRGRKLG (394 aa)).

The protein in the N-terminal section; belongs to the methyltransferase superfamily. tRNA (mnm(5)s(2)U34)-methyltransferase family. It in the C-terminal section; belongs to the DAO family. FAD is required as a cofactor.

The protein resides in the cytoplasm. The catalysed reaction is 5-aminomethyl-2-thiouridine(34) in tRNA + S-adenosyl-L-methionine = 5-methylaminomethyl-2-thiouridine(34) in tRNA + S-adenosyl-L-homocysteine + H(+). Its function is as follows. Catalyzes the last two steps in the biosynthesis of 5-methylaminomethyl-2-thiouridine (mnm(5)s(2)U) at the wobble position (U34) in tRNA. Catalyzes the FAD-dependent demodification of cmnm(5)s(2)U34 to nm(5)s(2)U34, followed by the transfer of a methyl group from S-adenosyl-L-methionine to nm(5)s(2)U34, to form mnm(5)s(2)U34. This chain is tRNA 5-methylaminomethyl-2-thiouridine biosynthesis bifunctional protein MnmC, found in Burkholderia vietnamiensis (strain G4 / LMG 22486) (Burkholderia cepacia (strain R1808)).